Consider the following 1183-residue polypeptide: DNA-directed RNA polymerase subunit beta (1183 aa).

Positions 1149–1162 are enriched in acidic residues; sequence DNEIEMADVDDEDA. Residues 1149-1183 form a disordered region; it reads DNEIEMADVDDEDATERKVDLQQKDVPETQKETTD. Positions 1163 to 1183 are enriched in basic and acidic residues; sequence TERKVDLQQKDVPETQKETTD.

This sequence belongs to the RNA polymerase beta chain family. The RNAP catalytic core consists of 2 alpha, 1 beta, 1 beta' and 1 omega subunit. When a sigma factor is associated with the core the holoenzyme is formed, which can initiate transcription.

It catalyses the reaction RNA(n) + a ribonucleoside 5'-triphosphate = RNA(n+1) + diphosphate. In terms of biological role, DNA-dependent RNA polymerase catalyzes the transcription of DNA into RNA using the four ribonucleoside triphosphates as substrates. This is DNA-directed RNA polymerase subunit beta from Staphylococcus haemolyticus (strain JCSC1435).